A 257-amino-acid chain; its full sequence is Large ribosomal subunit protein bL28m (257 aa).

The N-terminal 55 residues, Met-1 to Lys-55, are a transit peptide targeting the mitochondrion.

The protein belongs to the bacterial ribosomal protein bL28 family. As to quaternary structure, component of the mitochondrial ribosome large subunit (39S) which comprises a 16S rRNA and about 50 distinct proteins. Interacts with OXA1L.

The protein resides in the mitochondrion. The polypeptide is Large ribosomal subunit protein bL28m (Mrpl28) (Mus musculus (Mouse)).